Consider the following 236-residue polypeptide: Ribonuclease 3 (236 aa).

One can recognise an RNase III domain in the interval 8–130; that stretch reads FRRLSQALDY…TFAAVSFDAD (123 aa). E43 is a Mg(2+) binding site. Residue D47 is part of the active site. Positions 116 and 119 each coordinate Mg(2+). E119 is an active-site residue. A DRBM domain is found at 157 to 227; sequence DAKTRLQEAL…AEAALTLLEQ (71 aa).

It belongs to the ribonuclease III family. As to quaternary structure, homodimer. Mg(2+) serves as cofactor.

The protein resides in the cytoplasm. The catalysed reaction is Endonucleolytic cleavage to 5'-phosphomonoester.. In terms of biological role, digests double-stranded RNA. Involved in the processing of primary rRNA transcript to yield the immediate precursors to the large and small rRNAs (23S and 16S). Processes some mRNAs, and tRNAs when they are encoded in the rRNA operon. Processes pre-crRNA and tracrRNA of type II CRISPR loci if present in the organism. This is Ribonuclease 3 from Chromobacterium violaceum (strain ATCC 12472 / DSM 30191 / JCM 1249 / CCUG 213 / NBRC 12614 / NCIMB 9131 / NCTC 9757 / MK).